A 776-amino-acid polypeptide reads, in one-letter code: 3-isopropylmalate dehydratase (776 aa).

[4Fe-4S] cluster contacts are provided by Cys-357, Cys-418, and Cys-421. A compositionally biased stretch (basic and acidic residues) spans 482 to 493 (SAPKVEVRHDTD). Disordered regions lie at residues 482-518 (SAPK…SDVA) and 525-544 (DIPV…SADA). Positions 527–538 (PVSNSSTQSPGS) are enriched in polar residues.

The protein belongs to the aconitase/IPM isomerase family. Monomer. [4Fe-4S] cluster is required as a cofactor.

The catalysed reaction is (2R,3S)-3-isopropylmalate = (2S)-2-isopropylmalate. The protein operates within amino-acid biosynthesis; L-leucine biosynthesis; L-leucine from 3-methyl-2-oxobutanoate: step 2/4. Catalyzes the isomerization between 2-isopropylmalate and 3-isopropylmalate, via the formation of 2-isopropylmaleate. The protein is 3-isopropylmalate dehydratase (LEU1) of Eremothecium gossypii (strain ATCC 10895 / CBS 109.51 / FGSC 9923 / NRRL Y-1056) (Yeast).